A 237-amino-acid polypeptide reads, in one-letter code: MPVKKKRKAPGVAAAVAEDAGLKKCKIPSYCRSQPPARLISGEEDFSRKKCLAWFYEYAGPDEVVGPEGMEKFCEDIGVEPENIIMLVLAWKLEAESMGFFTKEEWLKGMTSLQCDCTEKLQSRFDFLRSQLNDISSFKNIYRYAFDFARDKDQRSLDIDTAKSMLALLLGRTWPLFSVFYQYLEQSKYRVMNKDQWYNVLEFSRTVHADLSNYDEDGAWPVLLDEFVEWQKIRQTS.

The residue at position 41 (Ser41) is a Phosphoserine; by IKKA. The region spanning 46 to 232 (FSRKKCLAWF…LLDEFVEWQK (187 aa)) is the DCUN1 domain.

Part of a complex that contains DCUN1D5, CUL1 and RBX1; this interaction is bridged by CUL1. Interacts (via the DCUN1 domain) with the unneddylated cullins: interacts with CUL1, CUL2, CUL3, CUL4A, CUL4B and CUL5; these interactions promote the cullin neddylation and the identity of the cullin dictates the affinity of the interaction. Interacts (via DCUN1 domain) with UBE2M (N-terminally acetylated form) and probably with UBE2F (N-terminally acetylated form). May also interact with regulators or subunits of cullin-RING ligases such as RBX1, RNF7, ELOB and DDB1; these interactions are bridged by cullins. Interacts with CAND1; this interaction is bridged by cullins and strongly inhibits the neddylation of cullins. These CAND-cullin-DCNL complexes can only be neddylated in the presence of a substrate adapter. In terms of processing, phosphorylation at Ser-41 is independent of cullin's interaction. Phosphorylated in response to both TICAM1 and MYD88 dependent Toll-like receptor (TLR) pathway activation. Phosphorylated in response to IL1B stimulation. In terms of tissue distribution, highly expressed in testis. Lower levels of expression in skin, thymus, spleen, lymph nodes, lung, brain, heart, skeletal muscles, kidney, liver an ovary.

It localises to the nucleus. It is found in the cytoplasm. The protein localises to the cytoskeleton. The protein resides in the spindle. Functionally, contributes to the neddylation of all cullins by transferring NEDD8 from N-terminally acetylated NEDD8-conjugating E2s enzyme to different cullin C-terminal domain-RBX complexes which is necessary for the activation of cullin-RING E3 ubiquitin ligases (CRLs). May play a role in DNA damage response and may participate in cell proliferation and anchorage-independent cell growth. This is DCN1-like protein 5 from Mus musculus (Mouse).